A 359-amino-acid polypeptide reads, in one-letter code: Probable dual-specificity RNA methyltransferase RlmN (359 aa).

Glu91 acts as the Proton acceptor in catalysis. The region spanning 97-335 is the Radical SAM core domain; it reads QHYGHSVCVT…CVVRQEHGTD (239 aa). A disulfide bridge connects residues Cys104 and Cys340. Residues Cys111, Cys115, and Cys118 each coordinate [4Fe-4S] cluster. S-adenosyl-L-methionine contacts are provided by residues 163–164, Ser195, 218–220, and Asn296; these read GE and SLH. Residue Cys340 is the S-methylcysteine intermediate of the active site.

This sequence belongs to the radical SAM superfamily. RlmN family. [4Fe-4S] cluster is required as a cofactor.

It is found in the cytoplasm. The enzyme catalyses adenosine(2503) in 23S rRNA + 2 reduced [2Fe-2S]-[ferredoxin] + 2 S-adenosyl-L-methionine = 2-methyladenosine(2503) in 23S rRNA + 5'-deoxyadenosine + L-methionine + 2 oxidized [2Fe-2S]-[ferredoxin] + S-adenosyl-L-homocysteine. It carries out the reaction adenosine(37) in tRNA + 2 reduced [2Fe-2S]-[ferredoxin] + 2 S-adenosyl-L-methionine = 2-methyladenosine(37) in tRNA + 5'-deoxyadenosine + L-methionine + 2 oxidized [2Fe-2S]-[ferredoxin] + S-adenosyl-L-homocysteine. Specifically methylates position 2 of adenine 2503 in 23S rRNA and position 2 of adenine 37 in tRNAs. This chain is Probable dual-specificity RNA methyltransferase RlmN, found in Streptococcus pyogenes serotype M12 (strain MGAS2096).